The sequence spans 820 residues: Quinate repressor protein (820 aa).

The tract at residues 25–79 (SFEQMLLQQDSNESSRRTSPSRTHSRVDLERHSSHIVSLSSSNGSPSLEDPENRL) is disordered. The span at 59–71 (HIVSLSSSNGSPS) shows a compositional bias: low complexity.

It in the N-terminal section; belongs to the shikimate kinase family. This sequence in the 2nd section; belongs to the type-I 3-dehydroquinase family. The protein in the C-terminal section; belongs to the shikimate dehydrogenase family. As to quaternary structure, interacts with qutA; transcriptional activator of the quinate utilization pathway genes.

Its function is as follows. Multi-domain repressor protein that negatively regulates transcription of the quinate utilization pathway genes. May mediate its repressor activity by binding directly to the qutA activator protein. This chain is Quinate repressor protein (qutR), found in Talaromyces stipitatus (strain ATCC 10500 / CBS 375.48 / QM 6759 / NRRL 1006) (Penicillium stipitatum).